The sequence spans 1458 residues: ATPase family AAA domain-containing protein 2B (1458 aa).

The tract at residues 1-155 (MVNTRKSSLR…LRGEKKGDGD (155 aa)) is disordered. Phosphoserine is present on S16. Residues 23–33 (PGAGAEPGATG) show a composition bias toward gly residues. Residues 34-58 (GSSHFISSRTRSSKTRAASCPAAKA) show a composition bias toward low complexity. 3 positions are modified to phosphoserine: S79, S81, and S86. Basic and acidic residues predominate over residues 99–115 (VCKDKSKSRSTGQREEW). A compositionally biased stretch (polar residues) spans 116–129 (NLSTGQARLTSQPG). Phosphoserine is present on S140. At T221 the chain carries Phosphothreonine. Residues 244-286 (NSYGIQNHHEVSTEGEEEESQEEDGDIEVEEAEGEENDRPYNL) are disordered. The segment covering 256–279 (TEGEEEESQEEDGDIEVEEAEGEE) has biased composition (acidic residues). S318 carries the phosphoserine modification. Over residues 321-332 (RRSHIRRKKHAI) the composition is skewed to basic residues. The tract at residues 321-353 (RRSHIRRKKHAIHSSDTTSSDEERFERRKSKSM) is disordered. An ATP-binding site is contributed by 441–448 (GPPGTGKT). A Phosphoserine modification is found at S939. Residues 943–974 (QLSESEKSRMEDQEENTLRELRLFLRDVTKRL) adopt a coiled-coil conformation. The Bromo domain maps to 951–1066 (RMEDQEENTL…DTAHAIIAAE (116 aa)). Disordered regions lie at residues 1189–1208 (DCHE…NDES), 1217–1257 (QGQR…EQTS), and 1309–1330 (LLED…DDLE). The segment covering 1240–1252 (NESLLVNSSSSLN) has biased composition (low complexity). 2 positions are modified to phosphoserine: S1338 and S1347.

It belongs to the AAA ATPase family. As to quaternary structure, binds acetylated lysine residues in histone H1.4, H2A, H2B, H3 and H4 (in vitro).

The protein localises to the nucleus. The protein is ATPase family AAA domain-containing protein 2B (ATAD2B) of Homo sapiens (Human).